We begin with the raw amino-acid sequence, 219 residues long: Octanoyltransferase (219 aa).

Residues 32–207 (ENSQDEIWIV…TLSQELGLDK (176 aa)) enclose the BPL/LPL catalytic domain. Substrate contacts are provided by residues 71 to 78 (RGGQVTYH), 138 to 140 (SLG), and 151 to 153 (GLA). The active-site Acyl-thioester intermediate is Cys-169.

This sequence belongs to the LipB family.

Its subcellular location is the cytoplasm. It carries out the reaction octanoyl-[ACP] + L-lysyl-[protein] = N(6)-octanoyl-L-lysyl-[protein] + holo-[ACP] + H(+). The protein operates within protein modification; protein lipoylation via endogenous pathway; protein N(6)-(lipoyl)lysine from octanoyl-[acyl-carrier-protein]: step 1/2. Catalyzes the transfer of endogenously produced octanoic acid from octanoyl-acyl-carrier-protein onto the lipoyl domains of lipoate-dependent enzymes. Lipoyl-ACP can also act as a substrate although octanoyl-ACP is likely to be the physiological substrate. This chain is Octanoyltransferase, found in Shewanella pealeana (strain ATCC 700345 / ANG-SQ1).